A 562-amino-acid chain; its full sequence is Nucleoprotein (562 aa).

The segment at 53-238 (MRRERRDDND…ITQEESQINI (186 aa)) is binding site for the cap structure m7GTP. Mn(2+)-binding residues include Asp-381 and Glu-383. Zn(2+) contacts are provided by Glu-391, Cys-498, His-501, and Cys-522. A Mn(2+)-binding site is contributed by Asp-526.

This sequence belongs to the arenaviridae nucleocapsid protein family. In terms of assembly, homomultimerizes to form the nucleocapsid. Binds to viral genomic RNA. Interacts with glycoprotein G2. Interacts with protein Z; this interaction probably directs the encapsidated genome to budding sites. Interacts with protein L; this interaction does not interfere with Z-L interaction. Interacts with host IKBKE (via Protein kinase domain); the interaction inhibits IKBKE kinase activity.

The protein resides in the virion. The protein localises to the host cytoplasm. Encapsidates the genome, protecting it from nucleases. The encapsidated genomic RNA is termed the nucleocapsid (NC). Serves as template for viral transcription and replication. The increased presence of protein N in host cell does not seem to trigger the switch from transcription to replication as observed in other negative strain RNA viruses. Through the interaction with host IKBKE, strongly inhibits the phosphorylation and nuclear translocation of host IRF3, a protein involved in interferon activation pathway, leading to the inhibition of interferon-beta and IRF3-dependent promoters activation. Also encodes a functional 3'-5' exoribonuclease that degrades preferentially dsRNA substrates and thereby participates in the suppression of interferon induction. This is Nucleoprotein from Tamiami mammarenavirus (isolate Rat/United States/W 10777/1964) (TAMV).